The chain runs to 230 residues: Large ribosomal subunit protein uL1 (230 aa).

The protein belongs to the universal ribosomal protein uL1 family. As to quaternary structure, part of the 50S ribosomal subunit.

Binds directly to 23S rRNA. The L1 stalk is quite mobile in the ribosome, and is involved in E site tRNA release. Its function is as follows. Protein L1 is also a translational repressor protein, it controls the translation of the L11 operon by binding to its mRNA. The chain is Large ribosomal subunit protein uL1 from Caldicellulosiruptor bescii (strain ATCC BAA-1888 / DSM 6725 / KCTC 15123 / Z-1320) (Anaerocellum thermophilum).